Reading from the N-terminus, the 166-residue chain is Cyclic pyranopterin monophosphate synthase (166 aa).

Substrate contacts are provided by residues 75–77 (MCH) and 115–116 (ME). Aspartate 130 is a catalytic residue.

This sequence belongs to the MoaC family. In terms of assembly, homohexamer; trimer of dimers.

The catalysed reaction is (8S)-3',8-cyclo-7,8-dihydroguanosine 5'-triphosphate = cyclic pyranopterin phosphate + diphosphate. It functions in the pathway cofactor biosynthesis; molybdopterin biosynthesis. Functionally, catalyzes the conversion of (8S)-3',8-cyclo-7,8-dihydroguanosine 5'-triphosphate to cyclic pyranopterin monophosphate (cPMP). This chain is Cyclic pyranopterin monophosphate synthase, found in Shouchella clausii (strain KSM-K16) (Alkalihalobacillus clausii).